Consider the following 445-residue polypeptide: Serine protease inhibitor A3F (445 aa).

N-linked (GlcNAc...) asparagine glycans are attached at residues asparagine 28, asparagine 94, asparagine 174, and asparagine 259. The RCL stretch occupies residues 357–382 (GTEAAAGTGYQNLQCCQGVIYSMKIY).

The protein belongs to the serpin family.

This chain is Serine protease inhibitor A3F (Serpina3f), found in Mus musculus (Mouse).